Consider the following 441-residue polypeptide: Protein C-ets-1 (441 aa).

N6-acetyllysine; alternate occurs at positions 8 and 15. Residues K8 and K15 each participate in a glycyl lysine isopeptide (Lys-Gly) (interchain with G-Cter in SUMO2); alternate cross-link. A Glycyl lysine isopeptide (Lys-Gly) (interchain with G-Cter in SUMO); alternate cross-link involves residue K15. T38 is modified (phosphothreonine; by MAPK). The 86-residue stretch at 51–136 folds into the PNT domain; it reads ATFSGFTKEQ…EHLEILQKED (86 aa). The tract at residues 130–243 is activation domain; required for transcription activation; sequence EILQKEDVKP…DNMCMGRASR (114 aa). K138 is covalently cross-linked (Glycyl lysine isopeptide (Lys-Gly) (interchain with G-Cter in SUMO2)). Y223 is modified (phosphotyrosine). K227 is covalently cross-linked (Glycyl lysine isopeptide (Lys-Gly) (interchain with G-Cter in SUMO)). Phosphoserine is present on residues S251 and S254. T265 carries the phosphothreonine modification. Residues S267, S270, S282, and S285 each carry the phosphoserine modification. A helix HI-1 region spans residues 304-312; that stretch reads FKDYVRDRA. Residue K305 is modified to N6-acetyllysine. The tract at residues 323–330 is helix HI-2; that stretch reads AAALAGYT. Positions 335–415 form a DNA-binding region, ETS; it reads IQLWQFLLEL…AGKRYVYRFV (81 aa). Positions 418-422 are helix H4; that stretch reads LQSLL. The tract at residues 426 to 432 is helix H5; sequence PEELHAM.

This sequence belongs to the ETS family. As to quaternary structure, binds DNA as a homodimer; homodimerization is required for transcription activation. Interacts with MAF and MAFB. Interacts with PAX5; the interaction alters DNA-binding properties. Interacts with DAXX. Interacts with UBE2I. Interacts with SP100; the interaction is direct and modulates ETS1 transcriptional activity. In terms of processing, sumoylated on Lys-15 and Lys-227, preferentially with SUMO2; which inhibits transcriptional activity. Ubiquitinated; which induces proteasomal degradation. Post-translationally, phosphorylation at Ser-251, Ser-282 and Ser-285 by CaMK2/CaMKII in response to calcium signaling decreases affinity for DNA: an increasing number of phosphoserines causes DNA-binding to become progressively weaker.

Its subcellular location is the nucleus. The protein localises to the cytoplasm. Its activity is regulated as follows. Autoinhibited by a module composed of four alpha helices (HI-1, HI-2, H4, and H5) that flank the DNA-binding ETS domain, reducing the affinity for DNA. Phosphorylation by CaMK2/CaMKII in response to calcium signaling decreases affinity for DNA. Transcription factor. Directly controls the expression of cytokine and chemokine genes in a wide variety of different cellular contexts. May control the differentiation, survival and proliferation of lymphoid cells. May also regulate angiogenesis through regulation of expression of genes controlling endothelial cell migration and invasion. This Rattus norvegicus (Rat) protein is Protein C-ets-1 (Ets1).